We begin with the raw amino-acid sequence, 88 residues long: UPF0297 protein EAT1b_2723 (88 aa).

Belongs to the UPF0297 family.

The polypeptide is UPF0297 protein EAT1b_2723 (Exiguobacterium sp. (strain ATCC BAA-1283 / AT1b)).